A 503-amino-acid polypeptide reads, in one-letter code: Maturase K (503 aa).

Belongs to the intron maturase 2 family. MatK subfamily.

It localises to the plastid. It is found in the chloroplast. Its function is as follows. Usually encoded in the trnK tRNA gene intron. Probably assists in splicing its own and other chloroplast group II introns. The sequence is that of Maturase K from Panax ginseng (Korean ginseng).